Reading from the N-terminus, the 239-residue chain is Ribosomal RNA small subunit methyltransferase G (239 aa).

Residues Gly-77, Phe-82, 128-129, and Arg-147 contribute to the S-adenosyl-L-methionine site; that span reads AE. The disordered stretch occupies residues 219–239; that stretch reads RKTPKKYPRKPGTPNKLPIEK.

This sequence belongs to the methyltransferase superfamily. RNA methyltransferase RsmG family.

The protein resides in the cytoplasm. Specifically methylates the N7 position of guanine in position 535 of 16S rRNA. The chain is Ribosomal RNA small subunit methyltransferase G from Bacillus cytotoxicus (strain DSM 22905 / CIP 110041 / 391-98 / NVH 391-98).